Consider the following 204-residue polypeptide: Thymidylate kinase (204 aa).

11-18 (GLDKSGKT) contacts ATP.

It belongs to the thymidylate kinase family.

It carries out the reaction dTMP + ATP = dTDP + ADP. It participates in pyrimidine metabolism; dTTP biosynthesis. The protein is Thymidylate kinase (TMK) of Bos taurus (Bovine).